A 529-amino-acid polypeptide reads, in one-letter code: Bifunctional purine biosynthesis protein PurH (529 aa).

Positions Q2–V148 constitute an MGS-like domain.

The protein belongs to the PurH family.

The catalysed reaction is (6R)-10-formyltetrahydrofolate + 5-amino-1-(5-phospho-beta-D-ribosyl)imidazole-4-carboxamide = 5-formamido-1-(5-phospho-D-ribosyl)imidazole-4-carboxamide + (6S)-5,6,7,8-tetrahydrofolate. It catalyses the reaction IMP + H2O = 5-formamido-1-(5-phospho-D-ribosyl)imidazole-4-carboxamide. The protein operates within purine metabolism; IMP biosynthesis via de novo pathway; 5-formamido-1-(5-phospho-D-ribosyl)imidazole-4-carboxamide from 5-amino-1-(5-phospho-D-ribosyl)imidazole-4-carboxamide (10-formyl THF route): step 1/1. It participates in purine metabolism; IMP biosynthesis via de novo pathway; IMP from 5-formamido-1-(5-phospho-D-ribosyl)imidazole-4-carboxamide: step 1/1. This Photorhabdus laumondii subsp. laumondii (strain DSM 15139 / CIP 105565 / TT01) (Photorhabdus luminescens subsp. laumondii) protein is Bifunctional purine biosynthesis protein PurH.